Reading from the N-terminus, the 38-residue chain is Large ribosomal subunit protein bL36 (38 aa).

This sequence belongs to the bacterial ribosomal protein bL36 family.

The chain is Large ribosomal subunit protein bL36 from Pelodictyon phaeoclathratiforme (strain DSM 5477 / BU-1).